The primary structure comprises 158 residues: NAD(P)H-quinone oxidoreductase subunit J, chloroplastic (158 aa).

This sequence belongs to the complex I 30 kDa subunit family. In terms of assembly, NDH is composed of at least 16 different subunits, 5 of which are encoded in the nucleus.

Its subcellular location is the plastid. It localises to the chloroplast thylakoid membrane. It carries out the reaction a plastoquinone + NADH + (n+1) H(+)(in) = a plastoquinol + NAD(+) + n H(+)(out). The enzyme catalyses a plastoquinone + NADPH + (n+1) H(+)(in) = a plastoquinol + NADP(+) + n H(+)(out). NDH shuttles electrons from NAD(P)H:plastoquinone, via FMN and iron-sulfur (Fe-S) centers, to quinones in the photosynthetic chain and possibly in a chloroplast respiratory chain. The immediate electron acceptor for the enzyme in this species is believed to be plastoquinone. Couples the redox reaction to proton translocation, and thus conserves the redox energy in a proton gradient. The chain is NAD(P)H-quinone oxidoreductase subunit J, chloroplastic from Liriodendron tulipifera (Tuliptree).